Consider the following 222-residue polypeptide: Pyrrolidone-carboxylate peptidase (222 aa).

Residues Glu80, Cys146, and His170 contribute to the active site.

This sequence belongs to the peptidase C15 family. Homotetramer.

The protein localises to the cytoplasm. It catalyses the reaction Release of an N-terminal pyroglutamyl group from a polypeptide, the second amino acid generally not being Pro.. Removes 5-oxoproline from various penultimate amino acid residues except L-proline. The polypeptide is Pyrrolidone-carboxylate peptidase (Mycobacterium tuberculosis (strain ATCC 25177 / H37Ra)).